Consider the following 450-residue polypeptide: UDP-N-acetylmuramoylalanine--D-glutamate ligase (450 aa).

An ATP-binding site is contributed by 119-125; it reads GSNGKTT.

It belongs to the MurCDEF family.

The protein resides in the cytoplasm. The catalysed reaction is UDP-N-acetyl-alpha-D-muramoyl-L-alanine + D-glutamate + ATP = UDP-N-acetyl-alpha-D-muramoyl-L-alanyl-D-glutamate + ADP + phosphate + H(+). It functions in the pathway cell wall biogenesis; peptidoglycan biosynthesis. In terms of biological role, cell wall formation. Catalyzes the addition of glutamate to the nucleotide precursor UDP-N-acetylmuramoyl-L-alanine (UMA). In Streptococcus pneumoniae (strain CGSP14), this protein is UDP-N-acetylmuramoylalanine--D-glutamate ligase.